Consider the following 181-residue polypeptide: Probable cobalt-precorrin-6B C(15)-methyltransferase (decarboxylating) (181 aa).

Residues Thr16, 40–44, Asp61, and Ala89 contribute to the S-adenosyl-L-methionine site; that span reads GCGSG.

It belongs to the methyltransferase superfamily. Archaeal-type CbiT family.

It catalyses the reaction Co-precorrin-6B + S-adenosyl-L-methionine = Co-precorrin-7 + S-adenosyl-L-homocysteine + CO2. It functions in the pathway cofactor biosynthesis; adenosylcobalamin biosynthesis; cob(II)yrinate a,c-diamide from sirohydrochlorin (anaerobic route): step 8/10. In terms of biological role, catalyzes the methylation of C-15 in cobalt-precorrin-6B followed by the decarboxylation of C-12 to form cobalt-precorrin-7. The polypeptide is Probable cobalt-precorrin-6B C(15)-methyltransferase (decarboxylating) (Methanococcus maripaludis (strain C6 / ATCC BAA-1332)).